A 78-amino-acid polypeptide reads, in one-letter code: Small nuclear ribonucleoprotein F (78 aa).

Residues 7 to 78 form the Sm domain; it reads NPKPFLQGLI…NVLWVGESTV (72 aa).

Belongs to the snRNP Sm proteins family. SmF/LSm6 subfamily. In terms of assembly, belongs to the 40S cdc5-associated complex (or cwf complex), a spliceosome sub-complex reminiscent of a late-stage spliceosome composed of the U2, U5 and U6 snRNAs and at least brr2, cdc5, cwf2/prp3, cwf3/syf1, cwf4/syf3, cwf5/ecm2, spp42/cwf6, cwf7/spf27, cwf8, cwf9, cwf10, cwf11, cwf12, prp45/cwf13, cwf14, cwf15, cwf16, cwf17, cwf18, cwf19, cwf20, cwf21, cwf22, cwf23, cwf24, cwf25, cwf26, cyp7/cwf27, cwf28, cwf29/ist3, lea1, msl1, prp5/cwf1, prp10, prp12/sap130, prp17, prp22, sap61, sap62, sap114, sap145, slu7, smb1, smd1, smd3, smf1, smg1 and syf2.

The protein resides in the nucleus. It localises to the cytoplasm. Its function is as follows. Plays a role in pre-mRNA splicing as a core component of the spliceosomal U1, U2, U4 and U5 small nuclear ribonucleoproteins (snRNPs), the building blocks of the spliceosome. This Schizosaccharomyces pombe (strain 972 / ATCC 24843) (Fission yeast) protein is Small nuclear ribonucleoprotein F (smf1).